Reading from the N-terminus, the 361-residue chain is MLPLLLPLQLLLLMVMKGGHGCQGPELDRELVLAKVRALVLDALGPPNASKDGGKPVAQRLTRRHAHTGGSTRRSMENEDEDLSQVILFPTTGPGCEDEPEARAAEGLFTYTFRPSLHTRSRQVTAAQLWFHTGLDKVGAEVHNDSGPMVTLLAMSSGGPMAVPILLGPAPPHWAVLHLAAPAFTLLTRPLLVLLLRCPNCPCPAQLDATPFLVAHTRARPPSVGERARRSPLPPPWPWSPAALRLLQRPSEDPAAHADCHRAALNISFQELGWDQWIVHPPSFIFHYCHGGCGLVPSPVLSPGAALTPSQPLPLGPGSRPCCAAMPSTMRPLRVRTTSDGGYSFKYEIVPNLLTQHCACI.

The signal sequence occupies residues 1–21 (MLPLLLPLQLLLLMVMKGGHG). A propeptide spanning residues 22 to 64 (CQGPELDRELVLAKVRALVLDALGPPNASKDGGKPVAQRLTRR) is cleaved from the precursor. A disordered region spans residues 45-82 (GPPNASKDGGKPVAQRLTRRHAHTGGSTRRSMENEDED). N48, N144, and N266 each carry an N-linked (GlcNAc...) asparagine glycan. Positions 65 to 230 (HAHTGGSTRR…PPSVGERARR (166 aa)) are cleaved as a propeptide — inhibin alpha N-terminal region. 3 disulfides stabilise this stretch: C260–C323, C289–C358, and C293–C360.

It belongs to the TGF-beta family. As to quaternary structure, dimeric, linked by one or more disulfide bonds. Activin B is a dimer of alpha and beta-B. Inhibin A is a dimer of alpha and beta-A. Inhibin B is a dimer of alpha and beta-B. Interacts with TGFBR3L; this interaction regulates female fertility. In terms of processing, proteolytic processing yields a number of bioactive forms, consisting either solely of the mature alpha chain, of the most N-terminal propeptide linked through a disulfide bond to the mature alpha chain, or of the entire proprotein.

It is found in the secreted. Inhibins and activins inhibit and activate, respectively, the secretion of follitropin by the pituitary gland. Inhibins/activins are involved in regulating a number of diverse functions such as hypothalamic and pituitary hormone secretion, gonadal hormone secretion, germ cell development and maturation, erythroid differentiation, insulin secretion, nerve cell survival, embryonic axial development or bone growth, depending on their subunit composition. Inhibins appear to oppose the functions of activins. Functionally, inhibin A is a dimer of alpha/INHA and beta-A/INHBA that functions as a feedback regulator in the hypothalamic-pituitary-gonadal (HPG) axis. Inhibits the secretion of FSH from the anterior pituitary gland by acting on pituitary gonadotrope cells. Antagonizes activin A by binding to the proteoglycan, betaglycan, and forming a stable complex with and, thereby, sequestering type II activin receptors while excluding type I receptor. Its function is as follows. Inhibin B is a dimer of alpha and beta-B that plays a crucial role in the regulation of the reproductive system by inhibiting the secretion of follicle-stimulating hormone (FSH) from the anterior pituitary gland. Thereby, maintains reproductive homeostasis in both males and females. Acts as a more potent suppressor of FSH release than inhibin A. Functions as competitive receptor antagonist binding activin type II receptors with high affinity in the presence of the TGF-beta type III coreceptor/TGFBR3L. This chain is Inhibin alpha chain (INHA), found in Trichosurus vulpecula (Brush-tailed possum).